The following is a 138-amino-acid chain: NADH-quinone oxidoreductase subunit A 1 (138 aa).

3 helical membrane-spanning segments follow: residues 19–39, 74–94, and 103–123; these read FLPLALYTVAATVLIGVLLLA, FYLIAIFFIVFDVEAAFIFAW, and LAGLIHITFFIVILLLGLVWL.

It belongs to the complex I subunit 3 family. As to quaternary structure, NDH-1 is composed of 14 different subunits. Subunits NuoA, H, J, K, L, M, N constitute the membrane sector of the complex.

The protein localises to the cell inner membrane. The catalysed reaction is a quinone + NADH + 5 H(+)(in) = a quinol + NAD(+) + 4 H(+)(out). Its function is as follows. NDH-1 shuttles electrons from NADH, via FMN and iron-sulfur (Fe-S) centers, to quinones in the respiratory chain. The immediate electron acceptor for the enzyme in this species is believed to be ubiquinone. Couples the redox reaction to proton translocation (for every two electrons transferred, four hydrogen ions are translocated across the cytoplasmic membrane), and thus conserves the redox energy in a proton gradient. This is NADH-quinone oxidoreductase subunit A 1 from Geobacter metallireducens (strain ATCC 53774 / DSM 7210 / GS-15).